We begin with the raw amino-acid sequence, 142 residues long: NADH-quinone oxidoreductase subunit A (142 aa).

Helical transmembrane passes span 8 to 28 (FGTVFVFLLLGIIFVVGGYLT), 63 to 83 (FYVVALIFIIFDVEVVFLFPW), and 93 to 113 (FALIEALVFAGILVIGLVYAW).

The protein belongs to the complex I subunit 3 family. As to quaternary structure, NDH-1 is composed of 14 different subunits. Subunits NuoA, H, J, K, L, M, N constitute the membrane sector of the complex.

The protein localises to the cell inner membrane. The catalysed reaction is a quinone + NADH + 5 H(+)(in) = a quinol + NAD(+) + 4 H(+)(out). In terms of biological role, NDH-1 shuttles electrons from NADH, via FMN and iron-sulfur (Fe-S) centers, to quinones in the respiratory chain. The immediate electron acceptor for the enzyme in this species is believed to be a menaquinone. Couples the redox reaction to proton translocation (for every two electrons transferred, four hydrogen ions are translocated across the cytoplasmic membrane), and thus conserves the redox energy in a proton gradient. The protein is NADH-quinone oxidoreductase subunit A of Chlorobium phaeobacteroides (strain BS1).